The following is a 259-amino-acid chain: Hemin import ATP-binding protein HmuV (259 aa).

In terms of domain architecture, ABC transporter spans 6–242 (IQGRDLCVTY…ERIEQVYGYQ (237 aa)). 38-45 (GPNGAGKS) serves as a coordination point for ATP.

Belongs to the ABC transporter superfamily. Heme (hemin) importer (TC 3.A.1.14.5) family. As to quaternary structure, the complex is composed of two ATP-binding proteins (HmuV), two transmembrane proteins (HmuU) and a solute-binding protein (HmuT).

The protein resides in the cell inner membrane. Its function is as follows. Part of the ABC transporter complex HmuTUV involved in hemin import. Responsible for energy coupling to the transport system. The protein is Hemin import ATP-binding protein HmuV of Vibrio cholerae serotype O1 (strain ATCC 39315 / El Tor Inaba N16961).